Reading from the N-terminus, the 1247-residue chain is MSKFLDRFRYFKQKGETFADGHGQLLNTNRDWEDGYRQRWQHDKIVRSTHGVNCTGSCSWKIYVKNGLVTWETQQTDYPRTRPDLPNHEPRGCPRGASYSWYLYSANRLKYPMMRKRLMKMWREAKALHSDPVEAWASIIEDADKAKSFKQARGRGGFVRSSWQEVNELIAASNVYTIKNYGPDRVAGFSPIPAMSMVSYASGARYLSLIGGTCLSFYDWYCDLPPASPQTWGEQTDVPESADWYNSSYIIAWGSNVPQTRTPDAHFFTEVRYKGTKTVAVTPDYAEIAKLCDLWLAPKQGTDAAMALAMGHVMLREFHLDNPSQYFTDYVRRYTDMPMLVMLEERDGYYAAGRMLRAADLVDALGQENNPEWKTVAFNTNGEMVAPNGSIGFRWGEKGKWNLEQRDGKTGEETELQLSLLGSQDEIAEVGFPYFGGDGTEHFNKVELENVLLHKLPVKRLQLADGSTALVTTVYDLTLANYGLERGLNDVNCATSYDDVKAYTPAWAEQITGVSRSQIIRIAREFADNADKTHGRSMIIVGAGLNHWYHLDMNYRGLINMLIFCGCVGQSGGGWAHYVGQEKLRPQTGWQPLAFALDWQRPARHMNSTSYFYNHSSQWRYETVTAEELLSPMADKSRYTGHLIDFNVRAERMGWLPSAPQLGTNPLTIAGEAEKAGMNPVDYTVKSLKEGSIRFAAEQPENGKNHPRNLFIWRSNLLGSSGKGHEFMLKYLLGTEHGIQGKDLGQQGGVKPEEVDWQDNGLEGKLDLVVTLDFRLSSTCLYSDIILPTATWYEKDDMNTSDMHPFIHPLSAAVDPAWEAKSDWEIYKAIAKKFSEVCVGHLGKETDIVTLPIQHDSAAELAQPLDVKDWKKGECDLIPGKTAPHIMVVERDYPATYERFTSIGPLMEKIGNGGKGIAWNTQSEMDLLRKLNYTKAEGPAKGQPMLNTAIDAAEMILTLAPETNGQVAVKAWAALSEFTGRDHTHLALNKEDEKIRFRDIQAQPRKIISSPTWSGLEDEHVSYNAGYTNVHELIPWRTLSGRQQLYQDHQWMRDFGESLLVYRPPIDTRSVKEVIGQKSNGNQEKALNFLTPHQKWGIHSTYSDNLLMLTLGRGGPVVWLSEADAKDLGIADNDWIEVFNSNGALTARAVVSQRVPAGMTMMYHAQERIVNLPGSEITQQRGGIHNSVTRITPKPTHMIGGYAHLAYGFNYYGTVGSNRDEFVVVRKMKNIDWLDGEGNDQVQESVK.

Positions 43 to 107 constitute a 4Fe-4S Mo/W bis-MGD-type domain; the sequence is DKIVRSTHGV…SYSWYLYSAN (65 aa). Positions 50, 54, 58, and 93 each coordinate [4Fe-4S] cluster. Residue aspartate 223 coordinates Mo-bis(molybdopterin guanine dinucleotide).

The protein belongs to the prokaryotic molybdopterin-containing oxidoreductase family. As to quaternary structure, dimer of heterotrimers each composed of an alpha, a beta and a gamma chain. Alpha and beta are catalytic chains; gamma chains are involved in binding the enzyme complex to the cytoplasmic membrane. Interacts with the NarJ chaperone. It depends on [4Fe-4S] cluster as a cofactor. Mo-bis(molybdopterin guanine dinucleotide) is required as a cofactor.

Its subcellular location is the cell membrane. The catalysed reaction is nitrate + a quinol = a quinone + nitrite + H2O. In terms of biological role, the nitrate reductase enzyme complex allows E.coli to use nitrate as an electron acceptor during anaerobic growth. The alpha chain is the actual site of nitrate reduction. This is Respiratory nitrate reductase 1 alpha chain (narG) from Escherichia coli (strain K12).